Consider the following 284-residue polypeptide: Pantothenate synthetase (284 aa).

An ATP-binding site is contributed by 30-37 (MGNLHDGH). His37 (proton donor) is an active-site residue. Gln61 provides a ligand contact to (R)-pantoate. Residue Gln61 participates in beta-alanine binding. 149–152 (GEKD) contacts ATP. Gln155 lines the (R)-pantoate pocket. ATP contacts are provided by residues Ile178 and 186–189 (LSSR).

This sequence belongs to the pantothenate synthetase family. In terms of assembly, homodimer.

It is found in the cytoplasm. It carries out the reaction (R)-pantoate + beta-alanine + ATP = (R)-pantothenate + AMP + diphosphate + H(+). The protein operates within cofactor biosynthesis; (R)-pantothenate biosynthesis; (R)-pantothenate from (R)-pantoate and beta-alanine: step 1/1. Catalyzes the condensation of pantoate with beta-alanine in an ATP-dependent reaction via a pantoyl-adenylate intermediate. This is Pantothenate synthetase from Salmonella heidelberg (strain SL476).